Consider the following 377-residue polypeptide: N5-carboxyaminoimidazole ribonucleotide synthase (377 aa).

ATP contacts are provided by residues Arg-93, Lys-133, 138-144 (GYDGKGQ), 175-178 (EEFV), Glu-183, His-206, and 257-258 (NE). An ATP-grasp domain is found at 97 to 287 (KALLDRAQVA…QFENHLRAVC (191 aa)).

It belongs to the PurK/PurT family. In terms of assembly, homodimer.

The enzyme catalyses 5-amino-1-(5-phospho-beta-D-ribosyl)imidazole + hydrogencarbonate + ATP = 5-carboxyamino-1-(5-phospho-D-ribosyl)imidazole + ADP + phosphate + 2 H(+). It functions in the pathway purine metabolism; IMP biosynthesis via de novo pathway; 5-amino-1-(5-phospho-D-ribosyl)imidazole-4-carboxylate from 5-amino-1-(5-phospho-D-ribosyl)imidazole (N5-CAIR route): step 1/2. Catalyzes the ATP-dependent conversion of 5-aminoimidazole ribonucleotide (AIR) and HCO(3)(-) to N5-carboxyaminoimidazole ribonucleotide (N5-CAIR). This Vibrio cholerae serotype O1 (strain ATCC 39315 / El Tor Inaba N16961) protein is N5-carboxyaminoimidazole ribonucleotide synthase.